Consider the following 26-residue polypeptide: VSCADILTMATRQFDNVYYKNLQQGK.

Aspartate 15 is a binding site for Ca(2+).

This sequence belongs to the peroxidase family. Classical plant (class III) peroxidase subfamily. Requires heme b as cofactor. Ca(2+) is required as a cofactor.

It is found in the secreted. It carries out the reaction 2 a phenolic donor + H2O2 = 2 a phenolic radical donor + 2 H2O. Its function is as follows. Removal of H(2)O(2), oxidation of toxic reductants, biosynthesis and degradation of lignin, suberization, auxin catabolism, response to environmental stresses such as wounding, pathogen attack and oxidative stress. These functions might be dependent on each isozyme/isoform in each plant tissue. This is Peroxidase 1 from Vitis vinifera (Grape).